The primary structure comprises 591 residues: Alternative cytochrome c oxidase subunit 1 (591 aa).

Residues 40-60 traverse the membrane as a helical segment; that stretch reads VIAIQYSLTASAIGLVALVLS. Residue His-88 participates in heme b binding. 11 helical membrane passes run 90–110, 126–146, 172–192, 215–235, 274–294, 313–333, 337–357, 377–397, 412–432, 453–473, and 498–518; these read MIMVIYLLTALFLGGFGNYLI, MLSYWVYLLAVLVLASAFFVP, GIVLMLSSLILFIIGFTMGGL, VWGIFTATVMALLAFPALFVG, LFWFFGHPEVYIVALPAFGIV, VWAIVAIGALSFVVWAHHMYV, YPYFGFFFATTTLIIAIPTAI, MLFALGFIITFVNGGLTGLFL, VVAHFHMVMGVAPIMVVLGAI, FWVTFLGAYLIFFPMHYLGLL, and FITVVALTVGFAQMVFLFNLV. Cu cation is bound by residues His-280, Tyr-284, His-329, and His-330. Positions 280–284 form a cross-link, 1'-histidyl-3'-tyrosine (His-Tyr); it reads HPEVY. Residues His-415 and His-417 each contribute to the heme b site.

It belongs to the heme-copper respiratory oxidase family. This alternate cytochrome c oxidase consists of a subunit I and two cytochromes c. Equivalents to subunit 2 and 3 are not present in this complex.

Its subcellular location is the cell membrane. It catalyses the reaction 4 Fe(II)-[cytochrome c] + O2 + 8 H(+)(in) = 4 Fe(III)-[cytochrome c] + 2 H2O + 4 H(+)(out). In terms of biological role, cytochrome c oxidase is the component of the respiratory chain that catalyzes the reduction of oxygen to water. Subunits 1-3 form the functional core of the enzyme complex. Co I is the catalytic subunit of the enzyme. Electrons originating in cytochrome c are transferred via the copper A center of subunit 2 and a low-spin heme of subunit 1 to the bimetallic center formed by a high-spin heme and copper B. The sequence is that of Alternative cytochrome c oxidase subunit 1 (coxN) from Bradyrhizobium diazoefficiens (strain JCM 10833 / BCRC 13528 / IAM 13628 / NBRC 14792 / USDA 110).